A 127-amino-acid polypeptide reads, in one-letter code: Large ribosomal subunit protein bL20 (127 aa).

This sequence belongs to the bacterial ribosomal protein bL20 family.

Binds directly to 23S ribosomal RNA and is necessary for the in vitro assembly process of the 50S ribosomal subunit. It is not involved in the protein synthesizing functions of that subunit. The chain is Large ribosomal subunit protein bL20 from Bifidobacterium animalis subsp. lactis (strain AD011).